Consider the following 82-residue polypeptide: Exodeoxyribonuclease 7 small subunit (82 aa).

This sequence belongs to the XseB family. In terms of assembly, heterooligomer composed of large and small subunits.

It localises to the cytoplasm. The catalysed reaction is Exonucleolytic cleavage in either 5'- to 3'- or 3'- to 5'-direction to yield nucleoside 5'-phosphates.. Functionally, bidirectionally degrades single-stranded DNA into large acid-insoluble oligonucleotides, which are then degraded further into small acid-soluble oligonucleotides. This Pectobacterium carotovorum subsp. carotovorum (strain PC1) protein is Exodeoxyribonuclease 7 small subunit.